Consider the following 166-residue polypeptide: Endoribonuclease YbeY (166 aa).

Zn(2+)-binding residues include His132, His136, and His142.

The protein belongs to the endoribonuclease YbeY family. Zn(2+) is required as a cofactor.

It localises to the cytoplasm. In terms of biological role, single strand-specific metallo-endoribonuclease involved in late-stage 70S ribosome quality control and in maturation of the 3' terminus of the 16S rRNA. The sequence is that of Endoribonuclease YbeY from Clostridium acetobutylicum (strain ATCC 824 / DSM 792 / JCM 1419 / IAM 19013 / LMG 5710 / NBRC 13948 / NRRL B-527 / VKM B-1787 / 2291 / W).